Consider the following 130-residue polypeptide: Small ribosomal subunit protein uS9 (130 aa).

It belongs to the universal ribosomal protein uS9 family.

This is Small ribosomal subunit protein uS9 (rpsI) from Shigella flexneri.